We begin with the raw amino-acid sequence, 160 residues long: Ribosomal RNA large subunit methyltransferase H (160 aa).

S-adenosyl-L-methionine contacts are provided by residues Leu-76, Gly-108, and 127 to 132 (LGELTW).

This sequence belongs to the RNA methyltransferase RlmH family. As to quaternary structure, homodimer.

The protein resides in the cytoplasm. It catalyses the reaction pseudouridine(1915) in 23S rRNA + S-adenosyl-L-methionine = N(3)-methylpseudouridine(1915) in 23S rRNA + S-adenosyl-L-homocysteine + H(+). Functionally, specifically methylates the pseudouridine at position 1915 (m3Psi1915) in 23S rRNA. This chain is Ribosomal RNA large subunit methyltransferase H, found in Brucella anthropi (strain ATCC 49188 / DSM 6882 / CCUG 24695 / JCM 21032 / LMG 3331 / NBRC 15819 / NCTC 12168 / Alc 37) (Ochrobactrum anthropi).